Here is a 212-residue protein sequence, read N- to C-terminus: ATP-dependent dethiobiotin synthetase BioD (212 aa).

ATP is bound at residue 12 to 17; sequence DCGKTF. Mg(2+) is bound at residue Thr16. The active site involves Lys33. Residue Ser37 participates in substrate binding. Residues Asp50, 110 to 113, and 170 to 171 each bind ATP; these read EGAG and NC. Residues Asp50 and Glu110 each coordinate Mg(2+).

Belongs to the dethiobiotin synthetase family. In terms of assembly, homodimer. Requires Mg(2+) as cofactor.

It is found in the cytoplasm. The catalysed reaction is (7R,8S)-7,8-diammoniononanoate + CO2 + ATP = (4R,5S)-dethiobiotin + ADP + phosphate + 3 H(+). Its pathway is cofactor biosynthesis; biotin biosynthesis; biotin from 7,8-diaminononanoate: step 1/2. In terms of biological role, catalyzes a mechanistically unusual reaction, the ATP-dependent insertion of CO2 between the N7 and N8 nitrogen atoms of 7,8-diaminopelargonic acid (DAPA, also called 7,8-diammoniononanoate) to form a ureido ring. This chain is ATP-dependent dethiobiotin synthetase BioD, found in Legionella pneumophila (strain Lens).